A 556-amino-acid polypeptide reads, in one-letter code: Small ribosomal subunit protein bS1 (556 aa).

6 consecutive S1 motif domains span residues 35 to 105, 120 to 183, 204 to 272, 289 to 359, 377 to 444, and 461 to 525; these read TIKE…ISQQ, NAII…ISRK, TEPV…LSIK, GYAI…VSLK, DVLE…LSAK, and DSVI…ASVH.

It belongs to the bacterial ribosomal protein bS1 family.

Its function is as follows. Binds mRNA; thus facilitating recognition of the initiation point. It is needed to translate mRNA with a short Shine-Dalgarno (SD) purine-rich sequence. This is Small ribosomal subunit protein bS1 (rpsA) from Helicobacter pylori (strain ATCC 700392 / 26695) (Campylobacter pylori).